A 242-amino-acid polypeptide reads, in one-letter code: 1-(5-phosphoribosyl)-5-[(5-phosphoribosylamino)methylideneamino] imidazole-4-carboxamide isomerase (242 aa).

Residue aspartate 8 is the Proton acceptor of the active site. The Proton donor role is filled by aspartate 130.

The protein belongs to the HisA/HisF family.

The protein resides in the cytoplasm. It catalyses the reaction 1-(5-phospho-beta-D-ribosyl)-5-[(5-phospho-beta-D-ribosylamino)methylideneamino]imidazole-4-carboxamide = 5-[(5-phospho-1-deoxy-D-ribulos-1-ylimino)methylamino]-1-(5-phospho-beta-D-ribosyl)imidazole-4-carboxamide. The protein operates within amino-acid biosynthesis; L-histidine biosynthesis; L-histidine from 5-phospho-alpha-D-ribose 1-diphosphate: step 4/9. In Thioalkalivibrio sulfidiphilus (strain HL-EbGR7), this protein is 1-(5-phosphoribosyl)-5-[(5-phosphoribosylamino)methylideneamino] imidazole-4-carboxamide isomerase.